The primary structure comprises 157 residues: Probable succinate transporter subunit YjjB (157 aa).

A run of 4 helical transmembrane segments spans residues 6 to 26, 51 to 71, 87 to 107, and 129 to 149; these read IILT…GFAM, VLMI…ILVG, VFTV…VAMI, and FLKA…PGLW.

The protein belongs to the ThrE exporter (TC 2.A.79) family. The transporter is composed of YjjB and YjjP.

The protein localises to the cell inner membrane. Its function is as follows. Involved in succinate export with YjjP. Both proteins are required for export. The polypeptide is Probable succinate transporter subunit YjjB (Proteus mirabilis (strain HI4320)).